The chain runs to 110 residues: Late cornified envelope protein 2D (110 aa).

It belongs to the LCE family. In terms of tissue distribution, skin-specific. Expression was readily detected in adult trunk skin, adult arm skin, fetal skin, penal skin, vulva, esophagus and tongue. Not expressed in the cervix, rectum, lung, colon, or placenta.

Functionally, precursors of the cornified envelope of the stratum corneum. The sequence is that of Late cornified envelope protein 2D (LCE2D) from Homo sapiens (Human).